Consider the following 232-residue polypeptide: Ribose-5-phosphate isomerase A (232 aa).

Residues 28–31, 83–86, and 96–99 each bind substrate; these read TGST, DGAD, and KGGG. Catalysis depends on E105, which acts as the Proton acceptor. K123 contacts substrate.

It belongs to the ribose 5-phosphate isomerase family. As to quaternary structure, homodimer.

It carries out the reaction aldehydo-D-ribose 5-phosphate = D-ribulose 5-phosphate. It participates in carbohydrate degradation; pentose phosphate pathway; D-ribose 5-phosphate from D-ribulose 5-phosphate (non-oxidative stage): step 1/1. Its function is as follows. Catalyzes the reversible conversion of ribose-5-phosphate to ribulose 5-phosphate. The sequence is that of Ribose-5-phosphate isomerase A from Rhodopseudomonas palustris (strain HaA2).